Here is a 61-residue protein sequence, read N- to C-terminus: MAKKSMVERWKKPKKFKVREYTRCSICGRVHSVYREFGICRVCFRKMANEGKLPGVRKASW.

Residues Cys24, Cys27, Cys40, and Cys43 each contribute to the Zn(2+) site.

It belongs to the universal ribosomal protein uS14 family. Zinc-binding uS14 subfamily. As to quaternary structure, part of the 30S ribosomal subunit. Contacts proteins S3 and S10. Requires Zn(2+) as cofactor.

Its function is as follows. Binds 16S rRNA, required for the assembly of 30S particles and may also be responsible for determining the conformation of the 16S rRNA at the A site. This Fervidobacterium nodosum (strain ATCC 35602 / DSM 5306 / Rt17-B1) protein is Small ribosomal subunit protein uS14.